Reading from the N-terminus, the 711-residue chain is MPKPRMSWPYQRHRQASSPPHPHKEMNFFPQQPLPLGAGPGQMTFPLNWQMGGKDLTKGLNMLTLSPQQPGGKSGQQTSKGPENNLYSPFEEKVRPCIDLIDSLRALGVEQDLALPTIAVIGDQSSGKSSVLEALSGVPLPRGSGIITRCPLALRLKKKECPWQGRISYRKVELQLQDPSQVEREIRKAQDAIAGSGVGISHELISLEVTSPEVPDLTLIDLPGITRVAVGNQPQDIGLQIKALIRKYIQEQQTINLVVVPCNVDIATTEALRMAQEVDPEGDRTIGILTKPDLVDTGAEKVVLNVMQNLTYHLKKGYMIVKCRGQQEILNKLSLAEATKREIAFFHSHPHFRILLEEGKATVPRLAERLTVELIGHISKSLPLLFSQIKEIHQSATEELRLCGASVPSNDADKMFFLIEKIKVFNQDIENLAEGEEIVKEKEARLYNKIREEFKSWIVTLDCNSKKVKNIIHEEVSKYDRQYRGKELMGFVSYKTFESIVRQYLEELVDPALGMLQTVVEIVRQTFSDTAQKNFGEFSNLNQTTQNKVDSIAARAAERAEGLIRLQFRMEQLVFCQDDIYRVDLKAVREELFNPVAEHPQSLQLRLPFVNGPSPVSSITEIGVHVNAYFMGTSQRLANQIPFIIQYCVLQESRDHLQKAMMQMLQGREQYSWLLQEESHTSAKRHFLKEKIHRLAEARHTLSKFAQSLQG.

2 disordered regions span residues 1–26 and 62–88; these read MPKPRMSWPYQRHRQASSPPHPHKEM and MLTLSPQQPGGKSGQQTSKGPENNLYS. Over residues 66–82 the composition is skewed to low complexity; sequence SPQQPGGKSGQQTSKGP. The region spanning 112-383 is the Dynamin-type G domain; that stretch reads DLALPTIAVI…LIGHISKSLP (272 aa). A G1 motif region spans residues 122–129; sequence GDQSSGKS. Residue 122-129 coordinates GTP; the sequence is GDQSSGKS. A G2 motif region spans residues 147–149; that stretch reads ITR. The G3 motif stretch occupies residues 221-224; sequence DLPG. GTP is bound by residues 221 to 225 and 290 to 293; these read DLPGI and TKPD. The segment at 290–293 is G4 motif; the sequence is TKPD. The segment at 322-325 is G5 motif; the sequence is KCRG. The GED domain maps to 619 to 710; the sequence is ITEIGVHVNA…TLSKFAQSLQ (92 aa).

The protein belongs to the TRAFAC class dynamin-like GTPase superfamily. Dynamin/Fzo/YdjA family. In terms of tissue distribution, ubiquitous.

It localises to the cytoplasm. Its subcellular location is the nucleus. In terms of biological role, interferon-induced dynamin-like GTPase with antiviral activity against influenza virus A (FLUAV). In Sus scrofa (Pig), this protein is Interferon-induced GTP-binding protein Mx2 (MX2).